Here is a 266-residue protein sequence, read N- to C-terminus: Oxygen-evolving enhancer protein 2-3, chloroplastic (266 aa).

A chloroplast-targeting transit peptide spans 1–80 (MASTQCFLHH…VGSKVSPADA (80 aa)).

Belongs to the PsbP family.

The protein resides in the plastid. It is found in the chloroplast thylakoid membrane. Its function is as follows. May be involved in the regulation of photosystem II. The protein is Oxygen-evolving enhancer protein 2-3, chloroplastic (PSBP3) of Nicotiana tabacum (Common tobacco).